Consider the following 220-residue polypeptide: MGQKINPTGFRVGVIRDWDAKWYADKDFAAFLHEDIEIRNFINKKLQDASVSRIEIERAAKRVNISIHTAKPGMVIGKGGSEVENLRKQLNKLTGRQVHINIVEIKKPDLDAKLVGENIARQLEQRIAFRRAMRQAMQRTMRAGAKGIKTQASGRLNGADIARREHYNEGLVPLHTLRADIDYAWEEAATTYGRIGIKTWINRGEILPEKPKQNSVKGGK.

In terms of domain architecture, KH type-2 spans 38–106; sequence IRNFINKKLQ…QVHINIVEIK (69 aa).

It belongs to the universal ribosomal protein uS3 family. Part of the 30S ribosomal subunit. Forms a tight complex with proteins S10 and S14.

Functionally, binds the lower part of the 30S subunit head. Binds mRNA in the 70S ribosome, positioning it for translation. The sequence is that of Small ribosomal subunit protein uS3 from Lacticaseibacillus paracasei (strain ATCC 334 / BCRC 17002 / CCUG 31169 / CIP 107868 / KCTC 3260 / NRRL B-441) (Lactobacillus paracasei).